We begin with the raw amino-acid sequence, 238 residues long: Ribonuclease 3 (238 aa).

One can recognise an RNase III domain in the interval 8-135 (VAELERRIGY…LIAALYIDGG (128 aa)). Glutamate 48 provides a ligand contact to Mg(2+). Aspartate 52 is an active-site residue. The Mg(2+) site is built by aspartate 121 and glutamate 124. Glutamate 124 is a catalytic residue. The DRBM domain maps to 161-230 (DPKTQLQEWV…AQCMLLKREG (70 aa)).

This sequence belongs to the ribonuclease III family. As to quaternary structure, homodimer. Mg(2+) is required as a cofactor.

It is found in the cytoplasm. It carries out the reaction Endonucleolytic cleavage to 5'-phosphomonoester.. Digests double-stranded RNA. Involved in the processing of primary rRNA transcript to yield the immediate precursors to the large and small rRNAs (23S and 16S). Processes some mRNAs, and tRNAs when they are encoded in the rRNA operon. Processes pre-crRNA and tracrRNA of type II CRISPR loci if present in the organism. The sequence is that of Ribonuclease 3 from Phenylobacterium zucineum (strain HLK1).